The primary structure comprises 527 residues: Flavonoid 3',5'-hydroxylase CYP75B138 (527 aa).

The chain crosses the membrane as a helical span at residues 6 to 26; sequence LDIILFISAIVFLSIYYYNLF. Cysteine 459 lines the heme pocket.

This sequence belongs to the cytochrome P450 family. Requires heme as cofactor. Expressed in young cromes.

It is found in the membrane. It catalyses the reaction a 3',5'-unsubstituted flavanone + 2 reduced [NADPH--hemoprotein reductase] + 2 O2 = a 3',5'-dihydroxyflavanone + 2 oxidized [NADPH--hemoprotein reductase] + 2 H2O + 2 H(+). It carries out the reaction (2S)-naringenin + 2 reduced [NADPH--hemoprotein reductase] + 2 O2 = (2S)-dihydrotricetin + 2 oxidized [NADPH--hemoprotein reductase] + 2 H2O + 2 H(+). The enzyme catalyses (2R,3R)-dihydrokaempferol + 2 reduced [NADPH--hemoprotein reductase] + 2 O2 = (2R,3R)-dihydromyricetin + 2 oxidized [NADPH--hemoprotein reductase] + 2 H2O + 2 H(+). The catalysed reaction is kaempferol + 2 reduced [NADPH--hemoprotein reductase] + 2 O2 = myricetin + 2 oxidized [NADPH--hemoprotein reductase] + 2 H2O + 2 H(+). Its pathway is flavonoid metabolism. Its function is as follows. Flavonoid 3',5'-hydroxylase that catalyzes the 3'- and 5'-hydroxylation of flavanones, dihydroflavonols and flavonols. Converts narigenin to dihydrotricetin, dihydrokaempferol to dihydromyricetin and kaempferol to myricetin. This Crocosmia x crocosmiiflora (Montbretia) protein is Flavonoid 3',5'-hydroxylase CYP75B138.